A 214-amino-acid polypeptide reads, in one-letter code: GTP cyclohydrolase 1 (214 aa).

Cys108, His111, and Cys179 together coordinate Zn(2+).

The protein belongs to the GTP cyclohydrolase I family. As to quaternary structure, toroid-shaped homodecamer, composed of two pentamers of five dimers.

It catalyses the reaction GTP + H2O = 7,8-dihydroneopterin 3'-triphosphate + formate + H(+). It participates in cofactor biosynthesis; 7,8-dihydroneopterin triphosphate biosynthesis; 7,8-dihydroneopterin triphosphate from GTP: step 1/1. This is GTP cyclohydrolase 1 from Shewanella loihica (strain ATCC BAA-1088 / PV-4).